A 722-amino-acid chain; its full sequence is MAQTVQNVTLSLTLPITCHICLGKVRQPVVCTNNHVFCSICIDLWLKNNSQCPACRVPITPENPCKEIIGGTSESEPMLSHTVRKHLRKTRLELLHREYEDEIDCLQKEVEELKSKNLSLESQIKTILDPLALMQGSQNEDKHPLADNPSKMDPDSVVEWKKKLRTANEIYEKVKDDVDKLKEANKKLKLENGGLLRENLRLKAEVDNRSPQKFGRFTVAALQSKVEQYERETNRLKKALERSDKYIEELESQVAHLKHSEEAKEDVDALCQRAPSADSKGPNGSDELGPPKNQSDSARKQAGSASASHLASPSSSRLADSGSVRQESTSRTEPNCPQNKDRYPKPTEPRLGARETPMDTYLEREWGSKPSDCAPYKEDELYGIPASCTPLSLSCLQLNTPENRENPVIKAGSSKKHANHLRKLVFDDFCDSPNACNNNSSEDDRRENEKKSDCFASSKTGFWDCCSTSYAQSLEFDGSEGNAIANSVGEIPSKLSEKSGSCLSKRLSCIRSLEMNRTRTSSEASMDAAYLDKISELDSMMSESDNSKSPCNNGFKSVEVEGPSKSPQGREFLEEPDKLQEGSKLNLSKPALTADGLESGGEWKPSSFFLLSPADHEMSEDFSLHSTSHSGTSEVKPPNCLFQTEFSQGALLSSSQGLFEDQRFGSSLFKISSEMQSLHSPLQSPWSAAFVPEKRSKNGNQSTKRKIQSSLANASPSKATKS.

The segment at 18 to 56 adopts an RING-type; degenerate zinc-finger fold; the sequence is CHICLGKVRQPVVCTNNHVFCSICIDLWLKNNSQCPACR. Coiled-coil stretches lie at residues 87 to 129 and 157 to 267; these read LRKT…TILD and VVEW…KEDV. Position 210 is a phosphoserine (Ser-210). Residues 273–359 are disordered; it reads RAPSADSKGP…RLGARETPMD (87 aa). The segment covering 302-319 has biased composition (low complexity); the sequence is AGSASASHLASPSSSRLA. Positions 323-338 are enriched in polar residues; sequence SVRQESTSRTEPNCPQ. Basic and acidic residues predominate over residues 339–359; sequence NKDRYPKPTEPRLGARETPMD. Phosphoserine occurs at positions 522, 549, 557, 564, and 566. Polar residues predominate over residues 541 to 555; it reads MSESDNSKSPCNNGF. Disordered stretches follow at residues 541-585 and 691-722; these read MSES…GSKL and VPEKRSKNGNQSTKRKIQSSLANASPSKATKS. A compositionally biased stretch (basic and acidic residues) spans 571-581; it reads EFLEEPDKLQE. Polar residues predominate over residues 698–722; that stretch reads NGNQSTKRKIQSSLANASPSKATKS. Phosphoserine is present on residues Ser-715 and Ser-717.

As to quaternary structure, associates with ORC complex. Binds to chromatin; association is cell cycle-regulated, absent from mitotic chromosomes, is associated with chromatin from G1 and partially released from chromatin from mid S-phase. In terms of processing, auto-ubiquitinated.

The protein resides in the chromosome. The catalysed reaction is S-ubiquitinyl-[E2 ubiquitin-conjugating enzyme]-L-cysteine + [acceptor protein]-L-lysine = [E2 ubiquitin-conjugating enzyme]-L-cysteine + N(6)-ubiquitinyl-[acceptor protein]-L-lysine.. Its function is as follows. E3 ubiquitin ligase essential for DNA replication origin activation during S phase. Acts as a replication origin selector which selects the origins to be fired and catalyzes the multi-mono-ubiquitination of a subset of chromatin-bound ORC3 and ORC5 during S-phase. This is ORC ubiquitin ligase 1 from Mus musculus (Mouse).